A 334-amino-acid chain; its full sequence is Ficolin-1 (334 aa).

The signal sequence occupies residues methionine 1–proline 17. The disordered stretch occupies residues serine 47–threonine 117. In terms of domain architecture, Collagen-like spans glycine 50 to proline 88. Positions threonine 117–serine 334 constitute a Fibrinogen C-terminal domain. Cystine bridges form between cysteine 119–cysteine 147 and cysteine 126–cysteine 154. An a domain; contributes to trimerization region spans residues proline 123–glycine 162. Residues tryptophan 163 to threonine 251 are b domain; contributes to trimerization. Asparagine 261 is a glycosylation site (N-linked (GlcNAc...) asparagine). Ca(2+) is bound by residues aspartate 270 and aspartate 272. An intrachain disulfide couples cysteine 278 to cysteine 291. Asparagine 290–histidine 292 lines the a carbohydrate pocket. A p domain region spans residues lysine 325–serine 334.

This sequence belongs to the ficolin lectin family. In terms of assembly, homotrimer. Interacts with elastin/ELN. Interacts (via Fibrinogen C-terminal domain) with FFAR2. Interacts with CRP; may regulate monocyte activation by FCN1. In terms of tissue distribution, highly expressed in liver and spleen.

It is found in the secreted. It localises to the cell membrane. Its function is as follows. Extracellular lectin functioning as a pattern-recognition receptor in innate immunity. Binds the sugar moieties of pathogen-associated molecular patterns (PAMPs) displayed on microbes and activates the lectin pathway of the complement system. May also activate monocytes through a G protein-coupled receptor, FFAR2, inducing the secretion of interleukin-8/IL-8. Binds preferentially to 9-O-acetylated 2-6-linked sialic acid derivatives and to various glycans containing sialic acid engaged in a 2-3 linkage. The polypeptide is Ficolin-1 (Fcn1) (Mus musculus (Mouse)).